Consider the following 64-residue polypeptide: Conotoxin mr5.3 (64 aa).

The first 19 residues, 1–19, serve as a signal peptide directing secretion; sequence MRCVPVFVILLLLIASVPS. Residues 20 to 48 constitute a propeptide that is removed on maturation; sequence VDAQLKTKDDMPLASSHANVKRTLQILRN. 2 positions are modified to 4-carboxyglutamate: E56 and E60.

Contains 2 disulfide bonds that can be either 'C1-C3, C2-C4' or 'C1-C4, C2-C3', since these disulfide connectivities have been observed for conotoxins with cysteine framework V (for examples, see AC P0DQQ7 and AC P81755). Expressed by the venom duct.

The protein resides in the secreted. In Conus marmoreus (Marble cone), this protein is Conotoxin mr5.3.